A 331-amino-acid chain; its full sequence is UPF0194 membrane protein YbhG (331 aa).

The N-terminal stretch at 1–19 (MKKPVVIGLAIAAIVAVIA) is a signal peptide. Residues 107–208 (EEIAQAAAAV…LDLQDTTLIA (102 aa)) are a coiled coil.

Belongs to the UPF0194 family.

It is found in the periplasm. In Salmonella heidelberg (strain SL476), this protein is UPF0194 membrane protein YbhG.